A 456-amino-acid chain; its full sequence is tRNA modification GTPase MnmE (456 aa).

(6S)-5-formyl-5,6,7,8-tetrahydrofolate is bound by residues R24, E81, and K120. One can recognise a TrmE-type G domain in the interval 216–379; it reads GMTVVIAGRP…LREHLKACMG (164 aa). N226 is a K(+) binding site. Residues 226 to 231, 245 to 251, 270 to 273, 335 to 338, and 359 to 361 each bind GTP; these read NAGKSS, TEIAGTT, DTAG, NKAD, and SAR. S230 is a Mg(2+) binding site. Residues T245, I247, and T250 each contribute to the K(+) site. Mg(2+) is bound at residue T251. K456 contributes to the (6S)-5-formyl-5,6,7,8-tetrahydrofolate binding site.

This sequence belongs to the TRAFAC class TrmE-Era-EngA-EngB-Septin-like GTPase superfamily. TrmE GTPase family. In terms of assembly, homodimer. Heterotetramer of two MnmE and two MnmG subunits. It depends on K(+) as a cofactor.

Its subcellular location is the cytoplasm. Functionally, exhibits a very high intrinsic GTPase hydrolysis rate. Involved in the addition of a carboxymethylaminomethyl (cmnm) group at the wobble position (U34) of certain tRNAs, forming tRNA-cmnm(5)s(2)U34. The sequence is that of tRNA modification GTPase MnmE from Pseudomonas syringae pv. tomato (strain ATCC BAA-871 / DC3000).